Reading from the N-terminus, the 524-residue chain is 5'-AMP-activated protein kinase subunit gamma-2 (524 aa).

The segment at 1–178 is disordered; the sequence is MPLLDGDLEG…TRPPLASPTH (178 aa). Residues S21, S27, S29, S46, S94, S99, S117, and S118 each carry the phosphoserine modification. Over residues 112-123 the composition is skewed to low complexity; sequence TSGLSSSPSTPT. Phosphothreonine is present on T121. The span at 135–145 shows a compositional bias: basic and acidic residues; sequence SYKHEPERLEN. A compositionally biased stretch (polar residues) spans 148–168; sequence YASSSPPDTGQRFCPSSFQSP. The residue at position 152 (S152) is a Phosphoserine. CBS domains lie at 230-290, 312-370, and 385-447; these read PTSS…KSPM, TFKP…MSDM, and IGTY…NLDI. ADP is bound by residues R257, 272–277, V317, 338–339, and K357; these read MLTITD and HR. AMP is bound by residues R257, 272–277, V317, H338, 338–339, K357, T387, A392, 413–414, 429–432, R456, H485, 485–486, and 501–504; these read MLTITD, HR, SA, SKFD, and SLSD. ATP is bound by residues R257, 272 to 277, V317, 338 to 339, R339, and K357; these read MLTITD and HR. An AMPK pseudosubstrate motif is present at residues 325-346; it reads LLDAVYSLIKNKIHRLPVIDPI. Residues 429–432, R456, and 485–486 contribute to the ADP site; these read SKFD and HR. ATP is bound by residues 429–432, R456, and 485–486; these read SKFD and HR. Residues 459 to 517 enclose the CBS 4 domain; that stretch reads YFEGVVKCNKLEILETIVDRIVRAEVHRLVVANEADSIVGIISLSDILQALILTPAGAK.

This sequence belongs to the 5'-AMP-activated protein kinase gamma subunit family. As to quaternary structure, AMPK is a heterotrimer of an alpha catalytic subunit (PRKAA1 or PRKAA2), a beta (PRKAB1 or PRKAB2) and a gamma non-catalytic subunits (PRKAG1, PRKAG2 or PRKAG3). Interacts with FNIP1 and FNIP2. In terms of processing, phosphorylated by ULK1; leading to negatively regulate AMPK activity and suggesting the existence of a regulatory feedback loop between ULK1 and AMPK. Post-translationally, glycosylated; O-GlcNAcylated by OGT, promoting the AMP-activated protein kinase (AMPK) activity.

Functionally, AMP/ATP-binding subunit of AMP-activated protein kinase (AMPK), an energy sensor protein kinase that plays a key role in regulating cellular energy metabolism. In response to reduction of intracellular ATP levels, AMPK activates energy-producing pathways and inhibits energy-consuming processes: inhibits protein, carbohydrate and lipid biosynthesis, as well as cell growth and proliferation. AMPK acts via direct phosphorylation of metabolic enzymes, and by longer-term effects via phosphorylation of transcription regulators. Also acts as a regulator of cellular polarity by remodeling the actin cytoskeleton; probably by indirectly activating myosin. Gamma non-catalytic subunit mediates binding to AMP, ADP and ATP, leading to activate or inhibit AMPK: AMP-binding results in allosteric activation of alpha catalytic subunit (PRKAA1 or PRKAA2) both by inducing phosphorylation and preventing dephosphorylation of catalytic subunits. ADP also stimulates phosphorylation, without stimulating already phosphorylated catalytic subunit. ATP promotes dephosphorylation of catalytic subunit, rendering the AMPK enzyme inactive. The sequence is that of 5'-AMP-activated protein kinase subunit gamma-2 (PRKAG2) from Pongo abelii (Sumatran orangutan).